We begin with the raw amino-acid sequence, 318 residues long: Receptor homology region, transmembrane domain- and RING domain-containing protein 6 (318 aa).

Positions 1 to 20 (MNGSWITILSLLVISQLASS) are cleaved as a signal peptide. Residues 22-162 (VTLIGKNTFL…LIPGFGISSW (141 aa)) lie on the Lumenal side of the membrane. Cysteine 62 and cysteine 87 are joined by a disulfide. A PA domain is found at 70-143 (EKGSKFRPSY…RTSGEVLKEY (74 aa)). A glycan (N-linked (GlcNAc...) asparagine) is linked at asparagine 121. A helical membrane pass occupies residues 163-183 (SIMAITFVSLLVISAVLASYF). Residues 184–318 (SVRRHRIRQH…DLPIVVRVYL (135 aa)) lie on the Cytoplasmic side of the membrane. The RING-type; atypical zinc finger occupies 233–275 (CAICIDDYRVGEILRILPCKHKYHAVCIDSWLGRCRSFCPVCK).

The protein resides in the prevacuolar compartment membrane. Its subcellular location is the protein storage vacuole membrane. Functionally, involved in the trafficking of vacuolar proteins. May function as a sorting receptor for protein trafficking to the protein storage vacuole (PSV). The protein is Receptor homology region, transmembrane domain- and RING domain-containing protein 6 (RMR6) of Arabidopsis thaliana (Mouse-ear cress).